The primary structure comprises 89 residues: Progonadoliberin-1 (89 aa).

An N-terminal signal peptide occupies residues 1–23; it reads MKAFPTFALLFLVLLFSAHVSDA. At Gln24 the chain carries Pyrrolidone carboxylic acid. A Glycine amide modification is found at Gly33.

Belongs to the GnRH family. As to expression, expressed in the forebrain from larval stages.

The protein localises to the secreted. Its function is as follows. Stimulates the secretion of gonadotropins. The chain is Progonadoliberin-1 (gnrh1) from Xenopus laevis (African clawed frog).